Here is a 74-residue protein sequence, read N- to C-terminus: Small ribosomal subunit protein bS18 (74 aa).

It belongs to the bacterial ribosomal protein bS18 family. Part of the 30S ribosomal subunit. Forms a tight heterodimer with protein bS6.

Binds as a heterodimer with protein bS6 to the central domain of the 16S rRNA, where it helps stabilize the platform of the 30S subunit. In Rhizorhabdus wittichii (strain DSM 6014 / CCUG 31198 / JCM 15750 / NBRC 105917 / EY 4224 / RW1) (Sphingomonas wittichii), this protein is Small ribosomal subunit protein bS18.